A 492-amino-acid chain; its full sequence is Ketol-acid reductoisomerase (NADP(+)) (492 aa).

A KARI N-terminal Rossmann domain is found at 15–208; sequence AQLGQCRFMD…GGDRAGVLQS (194 aa). NADP(+) is bound by residues 45-48, R68, R76, S78, and 108-110; these read CGAQ and DKQ. H132 is an active-site residue. NADP(+) is bound at residue G158. 2 KARI C-terminal knotted domains span residues 209–353 and 354–486; these read SFIA…DEQT and YFDK…MTDM. 4 residues coordinate Mg(2+): D217, E221, E389, and E393. S414 is a substrate binding site.

It belongs to the ketol-acid reductoisomerase family. The cofactor is Mg(2+).

The enzyme catalyses (2R)-2,3-dihydroxy-3-methylbutanoate + NADP(+) = (2S)-2-acetolactate + NADPH + H(+). The catalysed reaction is (2R,3R)-2,3-dihydroxy-3-methylpentanoate + NADP(+) = (S)-2-ethyl-2-hydroxy-3-oxobutanoate + NADPH + H(+). The protein operates within amino-acid biosynthesis; L-isoleucine biosynthesis; L-isoleucine from 2-oxobutanoate: step 2/4. Its pathway is amino-acid biosynthesis; L-valine biosynthesis; L-valine from pyruvate: step 2/4. Its function is as follows. Involved in the biosynthesis of branched-chain amino acids (BCAA). Catalyzes an alkyl-migration followed by a ketol-acid reduction of (S)-2-acetolactate (S2AL) to yield (R)-2,3-dihydroxy-isovalerate. In the isomerase reaction, S2AL is rearranged via a Mg-dependent methyl migration to produce 3-hydroxy-3-methyl-2-ketobutyrate (HMKB). In the reductase reaction, this 2-ketoacid undergoes a metal-dependent reduction by NADPH to yield (R)-2,3-dihydroxy-isovalerate. In Shewanella oneidensis (strain ATCC 700550 / JCM 31522 / CIP 106686 / LMG 19005 / NCIMB 14063 / MR-1), this protein is Ketol-acid reductoisomerase (NADP(+)).